The primary structure comprises 330 residues: tRNA pseudouridine synthase B (330 aa).

Asp42 (nucleophile) is an active-site residue.

Belongs to the pseudouridine synthase TruB family. Type 1 subfamily.

The catalysed reaction is uridine(55) in tRNA = pseudouridine(55) in tRNA. Responsible for synthesis of pseudouridine from uracil-55 in the psi GC loop of transfer RNAs. This is tRNA pseudouridine synthase B from Lactococcus lactis subsp. cremoris (strain MG1363).